Consider the following 293-residue polypeptide: METGTFKVKSGLAQMLKGGVIMDVTTPEQAKIAEEAGACAVMALERVPSDIRAAGGVARMADPTIIEQIMKVVSIPVMAKCRIGHFVEAQILESMGVDYIDESEVLTPADENFHVWKHDFKVPFVCGCRDLGEALRRIGEGAAMIRTKGEAGTGNIVEAVRHMRSVMGSVRRVQSMSPDELSAYAKEINAPLELVLELHKTGKLPVVNFAAGGVATPADAALMMQLGADGVFVGSGIFKSSNPSAMAKAVVKAVTHYKDAQILAEISKGLGDAMPGLDIKQIDPDKLISQRGW.

D-ribose 5-phosphate is bound at residue D23. K80 functions as the Schiff-base intermediate with D-ribose 5-phosphate in the catalytic mechanism. A D-ribose 5-phosphate-binding site is contributed by G152. R164 is a D-glyceraldehyde 3-phosphate binding site. D-ribose 5-phosphate contacts are provided by residues G213 and G234 to S235.

This sequence belongs to the PdxS/SNZ family. In the presence of PdxT, forms a dodecamer of heterodimers.

The catalysed reaction is aldehydo-D-ribose 5-phosphate + D-glyceraldehyde 3-phosphate + L-glutamine = pyridoxal 5'-phosphate + L-glutamate + phosphate + 3 H2O + H(+). It participates in cofactor biosynthesis; pyridoxal 5'-phosphate biosynthesis. Catalyzes the formation of pyridoxal 5'-phosphate from ribose 5-phosphate (RBP), glyceraldehyde 3-phosphate (G3P) and ammonia. The ammonia is provided by the PdxT subunit. Can also use ribulose 5-phosphate and dihydroxyacetone phosphate as substrates, resulting from enzyme-catalyzed isomerization of RBP and G3P, respectively. This Dehalococcoides mccartyi (strain ATCC BAA-2100 / JCM 16839 / KCTC 5957 / BAV1) protein is Pyridoxal 5'-phosphate synthase subunit PdxS.